A 207-amino-acid chain; its full sequence is MFKFTGHAGIVVPLDISNIDTDIIIPKQFLKRVNKIGFGKYLFHDWRFIDANQLVKNEDFILNKKIYKNASILLTRENFGCGSSREHAVWSLVDYGFKVIIAPSFADIFYNNSFNNKLLLITLSSSEITFLFDIVKNNIGITFDVSLVEKTVTVNKEVFSFELDDFHYFCLLNDLDNIDLTMKHLSEIKSYESRISDFLLERRDFQS.

Belongs to the LeuD family. LeuD type 1 subfamily. In terms of assembly, heterodimer of LeuC and LeuD.

The catalysed reaction is (2R,3S)-3-isopropylmalate = (2S)-2-isopropylmalate. The protein operates within amino-acid biosynthesis; L-leucine biosynthesis; L-leucine from 3-methyl-2-oxobutanoate: step 2/4. In terms of biological role, catalyzes the isomerization between 2-isopropylmalate and 3-isopropylmalate, via the formation of 2-isopropylmaleate. In Buchnera aphidicola subsp. Acyrthosiphon pisum (strain APS) (Acyrthosiphon pisum symbiotic bacterium), this protein is 3-isopropylmalate dehydratase small subunit (leuD).